The sequence spans 535 residues: Flavin-containing monooxygenase 2 (535 aa).

Alanine 2 carries the post-translational modification N-acetylalanine. Residues 9 to 13 (GAGVS), glutamate 32, 40 to 41 (VW), and 61 to 62 (NT) contribute to the FAD site. NADP(+) is bound by residues 60 to 61 (TN) and 195 to 198 (SGSD). Lysine 492 is covalently cross-linked (Glycyl lysine isopeptide (Lys-Gly) (interchain with G-Cter in SUMO)). A helical membrane pass occupies residues 510–530 (FSVSFLLKILGLLAVVVAFFC).

Belongs to the FMO family. It depends on FAD as a cofactor. Mg(2+) serves as cofactor. Expressed in lung (at protein level). Expressed predominantly in lung, and at a much lesser extent in kidney. Also expressed in fetal lung, but not in liver, kidney and brain.

Its subcellular location is the microsome membrane. It is found in the endoplasmic reticulum membrane. Functionally, catalyzes the oxidative metabolism of numerous xenobiotics, including mainly therapeutic drugs and insecticides that contain a soft nucleophile, most commonly nitrogen and sulfur and participates to their bioactivation. Specifically catalyzes S-oxygenation of sulfur derived compounds such as thioureas-derived compounds, thioetherorganophosphates to their sulfenic acid. In vitro, catalyzes S-oxygenation of the second-line antitubercular drugs thiacetazone (TAZ) and ethionamide (ETA), forming a sulfinic acid and a carbodiimide via a postulated sulfenic acid intermediate. Also catalyzes S-oxygenation of the thioether-containing organophosphate insecticides, phorate and disulfoton. The chain is Flavin-containing monooxygenase 2 from Homo sapiens (Human).